An 85-amino-acid chain; its full sequence is Small ribosomal subunit protein bS20 (85 aa).

This sequence belongs to the bacterial ribosomal protein bS20 family.

Functionally, binds directly to 16S ribosomal RNA. The protein is Small ribosomal subunit protein bS20 of Borrelia hermsii (strain HS1 / DAH).